A 264-amino-acid chain; its full sequence is Glutamate racemase (264 aa).

Substrate is bound by residues 10-11 (DS) and 42-43 (YG). Cys-73 functions as the Proton donor/acceptor in the catalytic mechanism. Position 74 to 75 (74 to 75 (NT)) interacts with substrate. Residue Cys-183 is the Proton donor/acceptor of the active site. 184–185 (TH) lines the substrate pocket.

The protein belongs to the aspartate/glutamate racemases family.

The enzyme catalyses L-glutamate = D-glutamate. It functions in the pathway cell wall biogenesis; peptidoglycan biosynthesis. Provides the (R)-glutamate required for cell wall biosynthesis. In Streptococcus uberis (strain ATCC BAA-854 / 0140J), this protein is Glutamate racemase.